The chain runs to 441 residues: Proline--tRNA ligase (441 aa).

The protein belongs to the class-II aminoacyl-tRNA synthetase family. ProS type 2 subfamily. As to quaternary structure, homodimer.

The protein localises to the cytoplasm. The catalysed reaction is tRNA(Pro) + L-proline + ATP = L-prolyl-tRNA(Pro) + AMP + diphosphate. Catalyzes the attachment of proline to tRNA(Pro) in a two-step reaction: proline is first activated by ATP to form Pro-AMP and then transferred to the acceptor end of tRNA(Pro). The polypeptide is Proline--tRNA ligase (Methylobacterium radiotolerans (strain ATCC 27329 / DSM 1819 / JCM 2831 / NBRC 15690 / NCIMB 10815 / 0-1)).